The chain runs to 761 residues: MLASSKRMNSSSRSQILLRWKSDKAQSGPYNVEKEILTSRFLRDTETCRQNFRNFPYPDLAGPRKALSQLRELCLKWLRPEIHSKEQILELLVLEQFLTILPGEVRTWVKSQYPESSEEAVTLVEDLTQILEEEAPQNSTLSQDTPEEDPRGKHAFQTGWLNDLVTKESMTFKDVAVDITQEDWELMRPVQKELYKTVTLQNYWNMVSLGLTVYRPTVIPILEEPWMVIKEILEGPSPEWETKAQACTPVEDMSKLTKEETHTIKLEDSYDYDDRLERRGKGGFWKIHTDERGFSLKSVLSQEYDPTEECLSKYDIYRNNFEKHSNLIVQFDTQLDNKTSVYNEGRATFNHVSYGIVHRKILPGEKPYKCNVCGKKFRKYPSLLKHQSTHAKEKSYECEECGKEFRHISSLIAHQRMHTGEKPYECHQCGKAFSQRAHLTIHQRIHTGEKPYKCDDCGKDFSQRAHLTIHQRTHTGEKPYKCLECGKTFSHSSSLINHQRVHTGEKPYICNECGKTFSQSTHLLQHQKIHTGKKPYKCNECWKVFSQSTYLIRHQRIHSGEKCYKCNECGKAFAHSSTLIQHQTTHTGEKSYICNICGKAFSQSANLTQHHRTHTGEKPYKCSVCGKAFSQSVHLTQHQRIHNGEKPFKCNICGKAYRQGANLTQHQRIHTGEKPYKCNECGKAFIYSSSLNQHQRTHTGERPYKCNECDKDFSQRTCLIQHQRIHTGEKPYACRICGKTFTQSTNLIQHQRVHTGAKHRN.

Residues 49 to 131 (RQNFRNFPYP…TLVEDLTQIL (83 aa)) enclose the SCAN box domain. The tract at residues 134–154 (EAPQNSTLSQDTPEEDPRGKH) is disordered. Residues 170–238 (MTFKDVAVDI…IKEILEGPSP (69 aa)) form the KRAB domain. 14 C2H2-type zinc fingers span residues 368 to 390 (YKCN…QSTH), 396 to 418 (YECE…QRMH), 424 to 446 (YECH…QRIH), 452 to 474 (YKCD…QRTH), 480 to 502 (YKCL…QRVH), 508 to 530 (YICN…QKIH), 536 to 558 (YKCN…QRIH), 564 to 586 (YKCN…QTTH), 592 to 614 (YICN…HRTH), 620 to 642 (YKCS…QRIH), 648 to 670 (FKCN…QRIH), 676 to 698 (YKCN…QRTH), 704 to 726 (YKCN…QRIH), and 732 to 754 (YACR…QRVH).

It belongs to the krueppel C2H2-type zinc-finger protein family.

The protein localises to the nucleus. Its function is as follows. May be involved in transcriptional regulation. This Homo sapiens (Human) protein is Zinc finger protein 287.